The primary structure comprises 159 residues: MQKRAIYPGTFDPITNGHIDIVTRATQMFDHVILAIAASPSKKPMFTLEERVALAQQATAHLGNVEVMGFSDLMANFARIQQANILIRGLRAVADFEYEMQLAHMNRHLMPQLESVFLMPSKEWSFISSSLVKEVARHQGDVTHFLPENVHQALMDKLK.

Thr10 contributes to the substrate binding site. ATP contacts are provided by residues 10–11 and His18; that span reads TF. Residues Lys42, Met74, and Arg88 each contribute to the substrate site. ATP is bound by residues 89 to 91, Glu99, and 124 to 130; these read GLR and WSFISSS.

Belongs to the bacterial CoaD family. As to quaternary structure, homohexamer. Mg(2+) serves as cofactor.

The protein resides in the cytoplasm. It carries out the reaction (R)-4'-phosphopantetheine + ATP + H(+) = 3'-dephospho-CoA + diphosphate. The protein operates within cofactor biosynthesis; coenzyme A biosynthesis; CoA from (R)-pantothenate: step 4/5. Functionally, reversibly transfers an adenylyl group from ATP to 4'-phosphopantetheine, yielding dephospho-CoA (dPCoA) and pyrophosphate. The protein is Phosphopantetheine adenylyltransferase of Citrobacter koseri (strain ATCC BAA-895 / CDC 4225-83 / SGSC4696).